The chain runs to 295 residues: Ethanolamine ammonia-lyase small subunit (295 aa).

Adenosylcob(III)alamin is bound by residues Val207, Glu228, and Cys258.

The protein belongs to the EutC family. The basic unit is a heterodimer which dimerizes to form tetramers. The heterotetramers trimerize; 6 large subunits form a core ring with 6 small subunits projecting outwards. The cofactor is adenosylcob(III)alamin.

It is found in the bacterial microcompartment. The catalysed reaction is ethanolamine = acetaldehyde + NH4(+). The protein operates within amine and polyamine degradation; ethanolamine degradation. Catalyzes the deamination of various vicinal amino-alcohols to oxo compounds. Allows this organism to utilize ethanolamine as the sole source of nitrogen and carbon in the presence of external vitamin B12. The chain is Ethanolamine ammonia-lyase small subunit from Escherichia coli (strain 55989 / EAEC).